We begin with the raw amino-acid sequence, 315 residues long: tRNA-specific adenosine deaminase subunit tad3 (315 aa).

Residues 158–299 (KRIESILEDL…AELNHRYLAY (142 aa)) form the CMP/dCMP-type deaminase domain. 3 residues coordinate Zn(2+): histidine 211, cysteine 253, and cysteine 256.

It belongs to the cytidine and deoxycytidylate deaminase family. ADAT3 subfamily. Heterodimer with Tad2.

It localises to the cytoplasm. The protein resides in the nucleus. Structural subunit of tRNA-specific adenosine deaminase, which deaminates adenosine-34 (the first, also called wobble position of the anticodon) to inosine in many tRNAs. Inosine-34 allows the decoding of 3 different nucleotides at the third position of mRNA codons, as inosine is able to pair with U, C, and A. The wobble inosine tRNA modification is essential for cell cycle progression in the G1/S and G2/M transitions in fission yeast. This chain is tRNA-specific adenosine deaminase subunit tad3 (tad3), found in Schizosaccharomyces pombe (strain 972 / ATCC 24843) (Fission yeast).